A 464-amino-acid polypeptide reads, in one-letter code: Anthocyanidin 3-O-galactosyltransferase 3GT1 (464 aa).

The an anthocyanidin site is built by Ser19 and His21. The active-site Proton acceptor is the His21. The N-linked (GlcNAc...) asparagine glycan is linked to Asn38. Asp121 functions as the Charge relay in the catalytic mechanism. His152 provides a ligand contact to an anthocyanidin. Ala342, Gln344, His359, Trp362, Asn363, Ser364, and Glu367 together coordinate UDP-alpha-D-glucose. An an anthocyanidin-binding site is contributed by Gly382. Asp383 serves as a coordination point for UDP-alpha-D-glucose.

Belongs to the UDP-glycosyltransferase family. Monomer. In terms of tissue distribution, mostly expressed in leaves and flowers and, to a lower extent, in roots. In flowers, mainly observed in petals, toruses and scapes, and at lower levels in pistils and stamens.

It catalyses the reaction cyanidin + UDP-alpha-D-galactose = cyanidin 3-O-beta-D-galactoside + UDP + H(+). The enzyme catalyses cyanidin + UDP-alpha-D-glucose = cyanidin 3-O-beta-D-glucoside + UDP + H(+). The catalysed reaction is delphinidin + UDP-alpha-D-glucose = delphinidin 3-O-beta-D-glucoside + UDP. It carries out the reaction malvidin + UDP-alpha-D-glucose = malvidin 3-O-beta-D-glucoside + UDP. It catalyses the reaction delphinidin + UDP-alpha-D-galactose = delphinidin 3-O-beta-D-galactoside + UDP + H(+). The enzyme catalyses pelargonidin + UDP-alpha-D-galactose = pelargonidin 3-O-beta-D-galactoside betaine + UDP. The catalysed reaction is peonidin + UDP-alpha-D-galactose = peonidin 3-O-beta-D-galactoside + UDP. It carries out the reaction malvidin + UDP-alpha-D-galactose = malvidin 3-O-beta-D-galactoside + UDP + H(+). It catalyses the reaction petunidin + UDP-alpha-D-galactose = petunidin 3-O-beta-D-galactoside + UDP. The enzyme catalyses an anthocyanidin + UDP-alpha-D-glucose + H(+) = an anthocyanidin 3-O-beta-D-glucoside + UDP. The catalysed reaction is an anthocyanidin + UDP-alpha-D-galactose = an anthocyanidin 3-O-beta-D-galactoside + UDP. Its pathway is pigment biosynthesis; anthocyanin biosynthesis. In terms of biological role, flavonoid 3-O-glycosyltransferase involved in the biosynthesis of anthocyanins conferring flower red/pink colors, mainly anthocyanidin 3-O-glycosides. Catalyzes the addition of UDP-sugar to the 3-OH of anthocyanidin, with a preference for UDP-galactose (UDP-Gal) as sugar donor and cyanidin as substrate; able to use delphinidin, pelargonidin, peonidin, malvidin and petunidin as substrates in the presence of UDP-Gal. Can also use UDP-glucose (UDP-Glu) as sugar donor with delphinidin, cyanidin and malvidin as substrates, but not active on pelargonidin, peonidin and petunidin. The sequence is that of Anthocyanidin 3-O-galactosyltransferase 3GT1 from Rhododendron delavayi (Rhododendron).